The sequence spans 82 residues: Conotoxin Cal30 (82 aa).

The signal sequence occupies residues 1 to 19; the sequence is MEKLIILLLVASLLVTTDS.

Post-translationally, may contain 5 disulfide bonds. Expressed by the venom duct.

It is found in the secreted. Functionally, probable neurotoxin. This Californiconus californicus (California cone) protein is Conotoxin Cal30.